Consider the following 486-residue polypeptide: Vacuolar-processing enzyme beta-isozyme (486 aa).

A signal peptide spans 1 to 21 (MAKSCYFRPALLLLLVLLVHA). Residue H169 is part of the active site. C211 functions as the Nucleophile in the catalytic mechanism. An intrachain disulfide couples C244 to C258. N-linked (GlcNAc...) asparagine glycosylation occurs at N309. Disulfide bonds link C420-C450 and C432-C467.

The protein belongs to the peptidase C13 family. In terms of processing, auto-catalytic activation. In terms of tissue distribution, seed specific. Also expressed in the flowers and buds.

The protein resides in the vacuole. It localises to the protein storage vacuole. The catalysed reaction is Hydrolysis of proteins and small molecule substrates at -Asn-|-Xaa- bonds.. Functionally, asparagine-specific endopeptidase involved in the processing of vacuolar seed protein precursors into the mature forms. Probably involved in post-translational proteolysis of seed storage proteins in the protein storage vacuole of developing seeds. This chain is Vacuolar-processing enzyme beta-isozyme, found in Arabidopsis thaliana (Mouse-ear cress).